The chain runs to 461 residues: Dihydrolipoyl dehydrogenase (461 aa).

Residues 33-41 (EAAEVGGVC), Lys50, and Ala112 contribute to the FAD site. A disulfide bridge connects residues Cys41 and Cys46. NAD(+) is bound by residues 173–177 (GGGAV), Glu196, and 263–266 (AVGR). Asp306 and Ala314 together coordinate FAD. The active-site Proton acceptor is the His437.

This sequence belongs to the class-I pyridine nucleotide-disulfide oxidoreductase family. As to quaternary structure, homodimer. Requires FAD as cofactor.

The protein localises to the membrane. The catalysed reaction is N(6)-[(R)-dihydrolipoyl]-L-lysyl-[protein] + NAD(+) = N(6)-[(R)-lipoyl]-L-lysyl-[protein] + NADH + H(+). Its function is as follows. Has chromate reductase activity. The protein is Dihydrolipoyl dehydrogenase of Thermus scotoductus (strain ATCC 700910 / SA-01).